The primary structure comprises 657 residues: Threonine--tRNA ligase (657 aa).

The region spanning 1–62 (MALDITFPDG…AHSGQLQIMT (62 aa)) is the TGS domain. Positions 240-538 (DHRVIGRDLD…LTEIYKGAFP (299 aa)) are catalytic. Residues Cys334, His385, and His515 each contribute to the Zn(2+) site.

This sequence belongs to the class-II aminoacyl-tRNA synthetase family. As to quaternary structure, homodimer. Zn(2+) serves as cofactor.

It is found in the cytoplasm. The enzyme catalyses tRNA(Thr) + L-threonine + ATP = L-threonyl-tRNA(Thr) + AMP + diphosphate + H(+). Functionally, catalyzes the attachment of threonine to tRNA(Thr) in a two-step reaction: L-threonine is first activated by ATP to form Thr-AMP and then transferred to the acceptor end of tRNA(Thr). Also edits incorrectly charged L-seryl-tRNA(Thr). This chain is Threonine--tRNA ligase, found in Lacticaseibacillus paracasei (strain ATCC 334 / BCRC 17002 / CCUG 31169 / CIP 107868 / KCTC 3260 / NRRL B-441) (Lactobacillus paracasei).